The primary structure comprises 704 residues: Meprin A subunit beta (704 aa).

Residues 1–20 (MDARHWPWFLVFATFLLVSG) form the signal peptide. Positions 21-64 (LPAPEKFVKDIDGGIDQDIFDINEDLGLDLFEGDIKLEASGRNS) are excised as a propeptide. At 21–654 (LPAPEKFVKD…RCEKRGSTKD (634 aa)) the chain is on the extracellular side. In terms of domain architecture, Peptidase M12A spans 63 to 257 (NSIIGDNYRW…LKLNQLYSCT (195 aa)). 3 disulfides stabilise this stretch: Cys-104/Cys-256, Cys-125/Cys-145, and Cys-266/Cys-428. A Zn(2+)-binding site is contributed by His-153. The active site involves Glu-154. His-157 and His-163 together coordinate Zn(2+). N-linked (GlcNAc...) asparagine glycosylation is found at Asn-193, Asn-219, Asn-316, Asn-422, Asn-437, Asn-528, Asn-547, and Asn-592. In terms of domain architecture, MAM spans 261-430 (SFMDSCDFEL…INLSETRCPH (170 aa)). Residues 431 to 585 (HIWHIQNFTQ…GDDVYILLTV (155 aa)) form the MATH domain. An EGF-like domain is found at 607 to 647 (VHNACSEVECQNGGICTLQEGRAECKCPAGEDWWYMGKRCE). 3 cysteine pairs are disulfide-bonded: Cys-611–Cys-622, Cys-616–Cys-631, and Cys-633–Cys-646. The helical transmembrane segment at 655–678 (TIVIAVSSTVTVFAVMLIITLISV) threads the bilayer. Residues 679–704 (YCTRRKYRKKASAKTAAMNLENQHAF) lie on the Cytoplasmic side of the membrane. At Thr-693 the chain carries Phosphothreonine.

As to quaternary structure, homotetramer consisting of disulfide-linked beta subunits, or heterotetramer of two alpha and two beta subunits formed by non-covalent association of two disulfide-linked heterodimers. Interacts with MBL2 through its carbohydrate moiety. This interaction may inhibit its catalytic activity. Interacts with TSPAN8. It depends on Zn(2+) as a cofactor. N-glycosylated; contains high mannose and/or complex biantennary structures. In terms of processing, proteolytically activated by trypsin in the intestinal lumen and kallikrein-related peptidases in other tissues. Post-translationally, phosphorylated by PKC at multiple sites of its cytoplasmic part. Phosphorylation dcreases activity at the cell surface, leading to diminished substrate cleavage. In terms of tissue distribution, kidney, intestinal brush borders and salivary ducts.

The protein localises to the cell membrane. Its subcellular location is the secreted. The catalysed reaction is Hydrolysis of proteins, including azocasein, and peptides. Hydrolysis of 5-His-|-Leu-6, 6-Leu-|-Cys-7, 14-Ala-|-Leu-15 and 19-Cys-|-Gly-20 bonds in insulin B chain.. Its activity is regulated as follows. Strongly inhibited by fetuin-A/AHSG. In terms of biological role, membrane metallopeptidase that sheds many membrane-bound proteins. Exhibits a strong preference for acidic amino acids at the P1' position. Known substrates include: FGF19, VGFA, IL1B, IL18, procollagen I and III, E-cadherin, KLK7, gastrin, ADAM10, tenascin-C. The presence of several pro-inflammatory cytokine among substrates implicate MEP1B in inflammation. It is also involved in tissue remodeling due to its capability to degrade extracellular matrix components. This chain is Meprin A subunit beta (Mep1b), found in Rattus norvegicus (Rat).